We begin with the raw amino-acid sequence, 393 residues long: Formate-dependent phosphoribosylglycinamide formyltransferase (393 aa).

Residues 15-16 (EL) and Glu75 contribute to the N(1)-(5-phospho-beta-D-ribosyl)glycinamide site. ATP-binding positions include Arg107, Lys148, 153 to 158 (SSGKGQ), 188 to 191 (EEYI), and Glu196. Residues 112 to 302 (NLAAEKLAIK…EFELHLRAIL (191 aa)) enclose the ATP-grasp domain. The Mg(2+) site is built by Glu261 and Glu273. N(1)-(5-phospho-beta-D-ribosyl)glycinamide contacts are provided by residues Asp280, Lys350, and 357-358 (RR).

This sequence belongs to the PurK/PurT family. As to quaternary structure, homodimer.

The catalysed reaction is N(1)-(5-phospho-beta-D-ribosyl)glycinamide + formate + ATP = N(2)-formyl-N(1)-(5-phospho-beta-D-ribosyl)glycinamide + ADP + phosphate + H(+). Its pathway is purine metabolism; IMP biosynthesis via de novo pathway; N(2)-formyl-N(1)-(5-phospho-D-ribosyl)glycinamide from N(1)-(5-phospho-D-ribosyl)glycinamide (formate route): step 1/1. Its function is as follows. Involved in the de novo purine biosynthesis. Catalyzes the transfer of formate to 5-phospho-ribosyl-glycinamide (GAR), producing 5-phospho-ribosyl-N-formylglycinamide (FGAR). Formate is provided by PurU via hydrolysis of 10-formyl-tetrahydrofolate. In Prochlorococcus marinus (strain SARG / CCMP1375 / SS120), this protein is Formate-dependent phosphoribosylglycinamide formyltransferase.